Consider the following 660-residue polypeptide: 1-deoxy-D-xylulose-5-phosphate synthase (660 aa).

Thiamine diphosphate-binding positions include histidine 86 and alanine 127–serine 129. Aspartate 164 lines the Mg(2+) pocket. Residues glycine 165–serine 166, asparagine 196, tyrosine 306, and glutamate 388 contribute to the thiamine diphosphate site. Asparagine 196 provides a ligand contact to Mg(2+).

This sequence belongs to the transketolase family. DXPS subfamily. As to quaternary structure, homodimer. It depends on Mg(2+) as a cofactor. The cofactor is thiamine diphosphate.

The enzyme catalyses D-glyceraldehyde 3-phosphate + pyruvate + H(+) = 1-deoxy-D-xylulose 5-phosphate + CO2. The protein operates within metabolic intermediate biosynthesis; 1-deoxy-D-xylulose 5-phosphate biosynthesis; 1-deoxy-D-xylulose 5-phosphate from D-glyceraldehyde 3-phosphate and pyruvate: step 1/1. In terms of biological role, catalyzes the acyloin condensation reaction between C atoms 2 and 3 of pyruvate and glyceraldehyde 3-phosphate to yield 1-deoxy-D-xylulose-5-phosphate (DXP). The polypeptide is 1-deoxy-D-xylulose-5-phosphate synthase (Gluconobacter oxydans (strain 621H) (Gluconobacter suboxydans)).